The chain runs to 184 residues: Shikimate kinase (184 aa).

18–23 lines the ATP pocket; it reads GAGKTT. Residue Thr22 coordinates Mg(2+). Substrate contacts are provided by Asp40, Arg64, and Gly86. Arg124 lines the ATP pocket. Arg143 is a substrate binding site. ATP is bound at residue Gln160.

This sequence belongs to the shikimate kinase family. As to quaternary structure, monomer. Requires Mg(2+) as cofactor.

It localises to the cytoplasm. It catalyses the reaction shikimate + ATP = 3-phosphoshikimate + ADP + H(+). The protein operates within metabolic intermediate biosynthesis; chorismate biosynthesis; chorismate from D-erythrose 4-phosphate and phosphoenolpyruvate: step 5/7. In terms of biological role, catalyzes the specific phosphorylation of the 3-hydroxyl group of shikimic acid using ATP as a cosubstrate. The chain is Shikimate kinase from Chromobacterium violaceum (strain ATCC 12472 / DSM 30191 / JCM 1249 / CCUG 213 / NBRC 12614 / NCIMB 9131 / NCTC 9757 / MK).